The chain runs to 268 residues: Tryptophan synthase alpha chain (268 aa).

Active-site proton acceptor residues include E49 and D60.

It belongs to the TrpA family. Tetramer of two alpha and two beta chains.

It catalyses the reaction (1S,2R)-1-C-(indol-3-yl)glycerol 3-phosphate + L-serine = D-glyceraldehyde 3-phosphate + L-tryptophan + H2O. It participates in amino-acid biosynthesis; L-tryptophan biosynthesis; L-tryptophan from chorismate: step 5/5. In terms of biological role, the alpha subunit is responsible for the aldol cleavage of indoleglycerol phosphate to indole and glyceraldehyde 3-phosphate. The sequence is that of Tryptophan synthase alpha chain from Serratia proteamaculans (strain 568).